Here is a 366-residue protein sequence, read N- to C-terminus: RISC-loading complex subunit TARBP2 (366 aa).

Sufficient for interaction with PRKRA stretches follow at residues Met22–Leu105, Ser152–Asp234, and Leu287–Lys366. A DRBM 1 domain is found at Thr30–Gly97. At Ser152 the chain carries Phosphoserine. DRBM domains lie at Asn159 to Thr227 and Ala293 to Ile361. Residues Val228–Lys366 are sufficient for interaction with DICER1.

It belongs to the TARBP2 family. Self-associates. Component of the RISC loading complex (RLC), or micro-RNA (miRNA) loading complex (miRLC), which is composed of DICER1, AGO2 and TARBP2. Note that the trimeric RLC/miRLC is also referred to as RISC. Interacts with EIF2AK2/PKR and inhibits its protein kinase activity. Interacts with DHX9 and PRKRA. Interacts with DICER1, AGO2, MOV10, EIF6 and RPL7A (60S ribosome subunit); they form a large RNA-induced silencing complex (RISC). Interacts with IRF7; this interaction prevents IRF7 phosphorylation and activation. In terms of assembly, (Microbial infection) Interacts with FTSJ3; forms a complex with FTSJ3 and HIV-1 TAR RNA. As to quaternary structure, (Microbial infection) Interacts with ebolavirus VP30; this interaction, which occurs only in the presence of siRNA, prevents TARBP2 binding to DICER1 and thus allows the virus to counteract host RNA silencing. (Microbial infection) Interacts with ebolavirus VP35; this interaction prevents TARBP2 binding to DICER1 and thus allows the virus to counteract host RNA silencing.

The protein localises to the cytoplasm. It is found in the perinuclear region. It localises to the nucleus. Its function is as follows. Required for formation of the RNA induced silencing complex (RISC). Component of the RISC loading complex (RLC), also known as the micro-RNA (miRNA) loading complex (miRLC), which is composed of DICER1, AGO2 and TARBP2. Within the RLC/miRLC, DICER1 and TARBP2 are required to process precursor miRNAs (pre-miRNAs) to mature miRNAs and then load them onto AGO2. AGO2 bound to the mature miRNA constitutes the minimal RISC and may subsequently dissociate from DICER1 and TARBP2. May also play a role in the production of short interfering RNAs (siRNAs) from double-stranded RNA (dsRNA) by DICER1. Binds in vitro to the PRM1 3'-UTR. Seems to act as a repressor of translation. For some pre-miRNA substrates, may also alter the choice of cleavage site by DICER1. Negatively regulates IRF7-mediated IFN-beta signaling triggered by viral infection by inhibiting the phosphorylation of IRF7 and promoting its 'Lys'-48-linked ubiquitination and degradation. In terms of biological role, (Microbial infection) Binds to the HIV-1 TAR RNA which is located in the long terminal repeat (LTR) of HIV-1, and stimulates translation of TAR-containing RNAs. This is achieved in part at least by binding to and inhibiting EIF2AK2/PKR, thereby reducing phosphorylation and inhibition of EIF2S1/eIF-2-alpha. May also promote translation of TAR-containing RNAs independently of EIF2AK2/PKR. Mediates recruitment of FTSJ3 methyltransferase to HIV-1 RNA, leading to 2'-O-methylation of the viral genome, allowing HIV-1 to escape the innate immune system. This chain is RISC-loading complex subunit TARBP2, found in Homo sapiens (Human).